Here is a 219-residue protein sequence, read N- to C-terminus: Large ribosomal subunit protein uL3 (219 aa).

The interval 113 to 142 (TTKGHGYQGNIHKDNQSRGPMAHGSRYHRR) is disordered.

It belongs to the universal ribosomal protein uL3 family. In terms of assembly, part of the 50S ribosomal subunit. Forms a cluster with proteins L14 and L19.

One of the primary rRNA binding proteins, it binds directly near the 3'-end of the 23S rRNA, where it nucleates assembly of the 50S subunit. The sequence is that of Large ribosomal subunit protein uL3 from Limosilactobacillus reuteri (strain DSM 20016) (Lactobacillus reuteri).